A 139-amino-acid chain; its full sequence is Cytochrome c-type biogenesis protein CcmE 2 (139 aa).

Over 1–9 (MASLKKSRR) the chain is Cytoplasmic. A helical; Signal-anchor for type II membrane protein membrane pass occupies residues 10–30 (VRLILFSGVALVSATALIGYA). Topologically, residues 31 to 139 (MRDGIQFFRT…ELAEMEALRD (109 aa)) are periplasmic. Heme is bound by residues histidine 122 and tyrosine 126.

Belongs to the CcmE/CycJ family.

Its subcellular location is the cell inner membrane. Functionally, heme chaperone required for the biogenesis of c-type cytochromes. Transiently binds heme delivered by CcmC and transfers the heme to apo-cytochromes in a process facilitated by CcmF and CcmH. The polypeptide is Cytochrome c-type biogenesis protein CcmE 2 (Ruegeria pomeroyi (strain ATCC 700808 / DSM 15171 / DSS-3) (Silicibacter pomeroyi)).